We begin with the raw amino-acid sequence, 195 residues long: NADH-quinone oxidoreductase subunit B (195 aa).

Residues Cys74, Cys75, Cys139, and Cys169 each contribute to the [4Fe-4S] cluster site.

This sequence belongs to the complex I 20 kDa subunit family. In terms of assembly, NDH-1 is composed of 14 different subunits. Subunits NuoB, C, D, E, F, and G constitute the peripheral sector of the complex. [4Fe-4S] cluster is required as a cofactor.

It is found in the cell inner membrane. The enzyme catalyses a quinone + NADH + 5 H(+)(in) = a quinol + NAD(+) + 4 H(+)(out). In terms of biological role, NDH-1 shuttles electrons from NADH, via FMN and iron-sulfur (Fe-S) centers, to quinones in the respiratory chain. The immediate electron acceptor for the enzyme in this species is believed to be ubiquinone. Couples the redox reaction to proton translocation (for every two electrons transferred, four hydrogen ions are translocated across the cytoplasmic membrane), and thus conserves the redox energy in a proton gradient. The sequence is that of NADH-quinone oxidoreductase subunit B from Methylobacterium radiotolerans (strain ATCC 27329 / DSM 1819 / JCM 2831 / NBRC 15690 / NCIMB 10815 / 0-1).